The sequence spans 381 residues: Lipid-A-disaccharide synthase (381 aa).

The protein belongs to the LpxB family.

The enzyme catalyses a lipid X + a UDP-2-N,3-O-bis[(3R)-3-hydroxyacyl]-alpha-D-glucosamine = a lipid A disaccharide + UDP + H(+). It participates in bacterial outer membrane biogenesis; LPS lipid A biosynthesis. Functionally, condensation of UDP-2,3-diacylglucosamine and 2,3-diacylglucosamine-1-phosphate to form lipid A disaccharide, a precursor of lipid A, a phosphorylated glycolipid that anchors the lipopolysaccharide to the outer membrane of the cell. This is Lipid-A-disaccharide synthase from Psychromonas ingrahamii (strain DSM 17664 / CCUG 51855 / 37).